Consider the following 413-residue polypeptide: MIQVLLVTICLAAFPYQGSSIILESGKVNDYEVVYPQRLAPLPEGAVQQKYEDTMQYEFKVNGEPVVLHLEKNKGLFSKDYSEIHYSPDGRRITTHPLVEDHCYYRGHIRNDADSTASISACHGLKGHFKLRGETYLIEPMKISNSEAHAVYKYENVEKEDEAHKMCGVTQNWESYEPIKKASQLIVSTEFQRYMEIVIVVDHSMVKKYNGDSDKIKAWVYEMINTITESYSYLYIDIILSGLEIWSEKDLINVETSAENTLKSFGEWRAKDLIHRISHDNAQLLTATDFDGPTIGLAYVASMCDPKRSVGVVQDHSSVNRLVAITLAHEMAHNLGVRHDEGSCSCGSGYTCIMSPVINSEVIKYFSDCSYIQCREYISKENPPCILNKPLRTDTVSTPVSGNELLEAEKDYD.

Positions 1–20 (MIQVLLVTICLAAFPYQGSS) are cleaved as a signal peptide. The propeptide occupies 21–189 (IILESGKVND…KKASQLIVST (169 aa)). Residues 193-390 (RYMEIVIVVD…ENPPCILNKP (198 aa)) enclose the Peptidase M12B domain. Residues E196 and D280 each coordinate Ca(2+). Disulfide bonds link C304–C385, C344–C369, and C346–C352. A Zn(2+)-binding site is contributed by H329. E330 is a catalytic residue. Zn(2+)-binding residues include H333 and H339. 7 residues coordinate Ca(2+): C385, N388, V400, N403, L405, E407, and D413. Positions 391–413 (LRTDTVSTPVSGNELLEAEKDYD) are excised as a propeptide.

It belongs to the venom metalloproteinase (M12B) family. P-I subfamily. In terms of assembly, monomer. The cofactor is Zn(2+). In terms of tissue distribution, expressed by the venom gland.

It is found in the secreted. Its function is as follows. Snake venom zinc metalloprotease that may activate prothrombin. The sequence is that of Snake venom metalloproteinase AaPA from Deinagkistrodon acutus (Hundred-pace snake).